We begin with the raw amino-acid sequence, 153 residues long: Small ribosomal subunit protein bS6 (153 aa).

A disordered region spans residues 94-153; it reads EAHEEGPSAMMQKRDRDDRPRRDGDRPDRGDRGDRGDRGPREGGRESFGDRPRRPREDRA.

It belongs to the bacterial ribosomal protein bS6 family.

In terms of biological role, binds together with bS18 to 16S ribosomal RNA. This is Small ribosomal subunit protein bS6 from Allorhizobium ampelinum (strain ATCC BAA-846 / DSM 112012 / S4) (Agrobacterium vitis (strain S4)).